Here is a 1021-residue protein sequence, read N- to C-terminus: INO80 complex subunit D (1021 aa).

Lysine 87 is covalently cross-linked (Glycyl lysine isopeptide (Lys-Gly) (interchain with G-Cter in SUMO2)). Serine 132 bears the Phosphoserine mark. Disordered stretches follow at residues 194–239 (FSTP…PMQG), 514–570 (RGDN…SMPT), 808–844 (RQQY…PHTS), 911–940 (SLST…SVLP), and 976–1021 (QLSS…PSPN). A compositionally biased stretch (polar residues) spans 224–239 (VCKSPQPQNTSLPMQG). Over residues 520–554 (KVQHQQQRKPRKKTKPPALTKKHKKKRRRGPRRPQ) the composition is skewed to basic residues. Residues 911–926 (SLSTPPTTSNSETTQP) show a composition bias toward low complexity. The segment covering 931-940 (VTPSSSSVLP) has biased composition (polar residues). A compositionally biased stretch (low complexity) spans 995-1014 (APPTGFTATGATATSTNNAS).

Belongs to the INO80D family. Component of the chromatin remodeling INO80 complex; specifically part of a complex module associated with the N-terminus of INO80.

Its subcellular location is the nucleus. Putative regulatory component of the chromatin remodeling INO80 complex which is involved in transcriptional regulation, DNA replication and probably DNA repair. In Mus musculus (Mouse), this protein is INO80 complex subunit D.